The following is a 900-amino-acid chain: Zinc finger protein 574 (900 aa).

3 consecutive C2H2-type zinc fingers follow at residues 16–38 (YVCSECNQLYGSLEEVLVHQNSH), 76–98 (YQCLECGQLLLSPSQLLEHQELH), and 126–148 (YECVDCKALFASQEMWLSHRQTH). Ser164 is modified (phosphoserine). A C2H2-type 4 zinc finger spans residues 213 to 235 (YKCSECSQLFQMPADFLEHQATH). A compositionally biased stretch (low complexity) spans 244 to 254 (AEPATQQETQV). The tract at residues 244 to 306 (AEPATQQETQ…RRNNSGESGG (63 aa)) is disordered. A compositionally biased stretch (basic and acidic residues) spans 273–290 (HSYELRNELRNGEAIGRD). Ser301 is modified (phosphoserine). 10 consecutive C2H2-type zinc fingers follow at residues 312–334 (LFCSACDQLFLSPHQLQQHLRSH), 339–361 (FKCPLCSRVFPSPSSLDQHLGDH), 367–389 (FLCVDCGLAFGTEALLLAHRRAH), 395–416 (HSCPCGKTFVNLTKFLYHRRTH), 469–492 (YRCLLCSREFGKALQLTRHQRFVH), 498–520 (HKCSICGKMFKKKSHVRNHLRTH), 526–548 (FPCPDCSKPFNSPANLARHRLTH), 554–576 (YRCGDCGKAFTQSSTLRQHRLVH), 582–604 (YRCQECGVRFHRPYRLLMHRYHH), and 610–633 (YKCRECPRSFLLRRLLEVHQLVIH). The C2H2-type 15; degenerate zinc-finger motif lies at 639–662 (YRCSSCGAAFPSSLRLREHRCAAA). The segment at 670–692 (FECGTCGKKVGSAARLQAHEAAH) adopts a C2H2-type 16 zinc-finger fold. The interval 690 to 741 (AAHAAAGPGEVLAKEPPAPRASRATRTPVAPSPTALSGTTSAAPAAPARRRG) is disordered. Ser721 is subject to Phosphoserine. The segment covering 721–736 (SPTALSGTTSAAPAAP) has biased composition (low complexity). Thr728 carries the phosphothreonine modification. 4 C2H2-type zinc fingers span residues 742-764 (PECSECKKLFSTETSLQVHRRIH), 770-792 (YPCPDCGKAFRQSTHLKDHRRLH), 798-820 (FACEVCGKAFAISMRLAEHRRIH), and 826-848 (YSCPDCGKSYRSFSNLWKHRKTH). Arg836 carries the asymmetric dimethylarginine modification.

This sequence belongs to the krueppel C2H2-type zinc-finger protein family.

The protein resides in the nucleus. Its function is as follows. May be involved in transcriptional regulation. The polypeptide is Zinc finger protein 574 (Znf574) (Mus musculus (Mouse)).